The sequence spans 494 residues: Lysine--tRNA ligase (494 aa).

2 residues coordinate Mg(2+): glutamate 405 and glutamate 412.

Belongs to the class-II aminoacyl-tRNA synthetase family. As to quaternary structure, homodimer. Requires Mg(2+) as cofactor.

The protein localises to the cytoplasm. It catalyses the reaction tRNA(Lys) + L-lysine + ATP = L-lysyl-tRNA(Lys) + AMP + diphosphate. This chain is Lysine--tRNA ligase (lysS), found in Geobacillus stearothermophilus (Bacillus stearothermophilus).